The primary structure comprises 133 residues: Ribonuclease P protein component (133 aa).

The tract at residues 114 to 133 is disordered; that stretch reads RSRPTPEEKSEPAGVDSTDA.

It belongs to the RnpA family. As to quaternary structure, consists of a catalytic RNA component (M1 or rnpB) and a protein subunit.

It carries out the reaction Endonucleolytic cleavage of RNA, removing 5'-extranucleotides from tRNA precursor.. RNaseP catalyzes the removal of the 5'-leader sequence from pre-tRNA to produce the mature 5'-terminus. It can also cleave other RNA substrates such as 4.5S RNA. The protein component plays an auxiliary but essential role in vivo by binding to the 5'-leader sequence and broadening the substrate specificity of the ribozyme. The sequence is that of Ribonuclease P protein component from Pseudomonas syringae pv. tomato (strain ATCC BAA-871 / DC3000).